The primary structure comprises 332 residues: Ornithine carbamoyltransferase 1, catabolic (332 aa).

Carbamoyl phosphate is bound by residues 56–59 (STRT), Gln-83, Arg-107, and 134–137 (HPTQ). L-ornithine is bound by residues Asn-167, Asp-231, and 235 to 236 (SM). Carbamoyl phosphate contacts are provided by residues 273–274 (CL) and Arg-318.

The protein belongs to the aspartate/ornithine carbamoyltransferase superfamily. OTCase family.

The protein resides in the cytoplasm. The catalysed reaction is carbamoyl phosphate + L-ornithine = L-citrulline + phosphate + H(+). Its pathway is amino-acid degradation; L-arginine degradation via ADI pathway; carbamoyl phosphate from L-arginine: step 2/2. Functionally, reversibly catalyzes the transfer of the carbamoyl group from carbamoyl phosphate (CP) to the N(epsilon) atom of ornithine (ORN) to produce L-citrulline. The chain is Ornithine carbamoyltransferase 1, catabolic (arcB1) from Staphylococcus epidermidis (strain ATCC 12228 / FDA PCI 1200).